Reading from the N-terminus, the 398-residue chain is 4-hydroxy-3-methylbut-2-enyl diphosphate reductase (398 aa).

Cys-66 is a [4Fe-4S] cluster binding site. His-96 is a binding site for (2E)-4-hydroxy-3-methylbut-2-enyl diphosphate. His-96 contacts dimethylallyl diphosphate. His-96 is a binding site for isopentenyl diphosphate. [4Fe-4S] cluster is bound at residue Cys-157. (2E)-4-hydroxy-3-methylbut-2-enyl diphosphate is bound at residue His-185. His-185 lines the dimethylallyl diphosphate pocket. His-185 lines the isopentenyl diphosphate pocket. Glu-187 functions as the Proton donor in the catalytic mechanism. Thr-250 contacts (2E)-4-hydroxy-3-methylbut-2-enyl diphosphate. Position 288 (Cys-288) interacts with [4Fe-4S] cluster. (2E)-4-hydroxy-3-methylbut-2-enyl diphosphate-binding residues include Ser-317, Ser-318, Asn-319, and Ser-380. Dimethylallyl diphosphate is bound by residues Ser-317, Ser-318, Asn-319, and Ser-380. Residues Ser-317, Ser-318, Asn-319, and Ser-380 each contribute to the isopentenyl diphosphate site.

This sequence belongs to the IspH family. The cofactor is [4Fe-4S] cluster.

The catalysed reaction is isopentenyl diphosphate + 2 oxidized [2Fe-2S]-[ferredoxin] + H2O = (2E)-4-hydroxy-3-methylbut-2-enyl diphosphate + 2 reduced [2Fe-2S]-[ferredoxin] + 2 H(+). It catalyses the reaction dimethylallyl diphosphate + 2 oxidized [2Fe-2S]-[ferredoxin] + H2O = (2E)-4-hydroxy-3-methylbut-2-enyl diphosphate + 2 reduced [2Fe-2S]-[ferredoxin] + 2 H(+). The protein operates within isoprenoid biosynthesis; dimethylallyl diphosphate biosynthesis; dimethylallyl diphosphate from (2E)-4-hydroxy-3-methylbutenyl diphosphate: step 1/1. It functions in the pathway isoprenoid biosynthesis; isopentenyl diphosphate biosynthesis via DXP pathway; isopentenyl diphosphate from 1-deoxy-D-xylulose 5-phosphate: step 6/6. Its function is as follows. Catalyzes the conversion of 1-hydroxy-2-methyl-2-(E)-butenyl 4-diphosphate (HMBPP) into a mixture of isopentenyl diphosphate (IPP) and dimethylallyl diphosphate (DMAPP). Acts in the terminal step of the DOXP/MEP pathway for isoprenoid precursor biosynthesis. This is 4-hydroxy-3-methylbut-2-enyl diphosphate reductase from Prochlorococcus marinus (strain MIT 9301).